The chain runs to 78 residues: Small ribosomal subunit protein bS18 (78 aa).

Belongs to the bacterial ribosomal protein bS18 family. As to quaternary structure, part of the 30S ribosomal subunit. Forms a tight heterodimer with protein bS6.

Functionally, binds as a heterodimer with protein bS6 to the central domain of the 16S rRNA, where it helps stabilize the platform of the 30S subunit. The chain is Small ribosomal subunit protein bS18 from Lactobacillus acidophilus (strain ATCC 700396 / NCK56 / N2 / NCFM).